The primary structure comprises 236 residues: MTGYEARLITFGTWMYSVNKEQLARAGFYAIGQEDKVQCFHCGGGLANWKPKEDPWEQHAKWYPGCKYLLEEKGHEYINNIHLTRSLEGALVQTTKKTPSLTKRISDTIFPNPMLQEAIRMGFDFKDVKKIMEERIQTSGSNYKTLEVLVADLVSAQKDTTENELNQTSLQREISPEEPLRRLQEEKLCKICMDRHIAVVFIPCGHLVTCKQCAEAVDRCPMCSAVIDFKQRVFMS.

One copy of the BIR repeat lies at 7–70 (RLITFGTWMY…KWYPGCKYLL (64 aa)). 4 residues coordinate Zn(2+): Cys39, Cys42, His59, and Cys66. The segment at 189 to 224 (CKICMDRHIAVVFIPCGHLVTCKQCAEAVDRCPMCS) adopts an RING-type zinc-finger fold.

This sequence belongs to the IAP family. As to quaternary structure, binds to caspase-9. As to expression, testis specific in normal tissues.

It is found in the cytoplasm. Its function is as follows. Protects against apoptosis mediated by BAX. This chain is Baculoviral IAP repeat-containing protein 8 (BIRC8), found in Homo sapiens (Human).